The chain runs to 371 residues: Cytochrome b (371 aa).

Transmembrane regions (helical) follow at residues 25–45 (FGSM…FLAI), 69–90 (WIMQ…YIHI), 105–125 (WLSG…GYVL), and 170–190 (FFAL…IHII). Heme b-binding residues include H75 and H89. H174 and H188 together coordinate heme b. A ubiquinone is bound at residue H193. 4 helical membrane passes run 218–238 (YKDT…LSFS), 280–300 (LGGT…PFTH), 312–332 (LAQM…WTAS), and 339–358 (FIII…IMNP).

The protein belongs to the cytochrome b family. As to quaternary structure, the cytochrome bc1 complex contains 3 respiratory subunits (MT-CYB, CYC1 and UQCRFS1), 2 core proteins (UQCRC1 and UQCRC2) and probably 6 low-molecular weight proteins. Requires heme b as cofactor.

The protein localises to the mitochondrion inner membrane. Functionally, component of the ubiquinol-cytochrome c reductase complex (complex III or cytochrome b-c1 complex) that is part of the mitochondrial respiratory chain. The b-c1 complex mediates electron transfer from ubiquinol to cytochrome c. Contributes to the generation of a proton gradient across the mitochondrial membrane that is then used for ATP synthesis. The chain is Cytochrome b (MT-CYB) from Sinomicrurus kelloggi (Kellogg's coral snake).